The following is a 348-amino-acid chain: Alcohol dehydrogenase 1 (348 aa).

Zn(2+) is bound by residues Cys-44, His-67, Cys-98, Cys-101, Cys-104, Cys-112, and Cys-154. Residues 178-184 (GACGGLG), Asp-202, Lys-207, 269-271 (VGL), and Arg-341 each bind NAD(+).

This sequence belongs to the zinc-containing alcohol dehydrogenase family. As to quaternary structure, homotetramer. Requires Zn(2+) as cofactor.

The protein resides in the cytoplasm. The enzyme catalyses a primary alcohol + NAD(+) = an aldehyde + NADH + H(+). The catalysed reaction is a secondary alcohol + NAD(+) = a ketone + NADH + H(+). The sequence is that of Alcohol dehydrogenase 1 (ADH1) from Kluyveromyces marxianus (Yeast).